Reading from the N-terminus, the 150-residue chain is Ribonuclease H (150 aa).

An RNase H type-1 domain is found at 1–142; that stretch reads MSDSVEIFTD…ADQLANRGVD (142 aa). Residues Asp10, Glu48, Asp70, and Asp134 each coordinate Mg(2+).

This sequence belongs to the RNase H family. In terms of assembly, monomer. Mg(2+) is required as a cofactor.

It is found in the cytoplasm. The enzyme catalyses Endonucleolytic cleavage to 5'-phosphomonoester.. Its function is as follows. Endonuclease that specifically degrades the RNA of RNA-DNA hybrids. This chain is Ribonuclease H, found in Pseudomonas fluorescens (strain ATCC BAA-477 / NRRL B-23932 / Pf-5).